The following is a 158-amino-acid chain: C-type lectin (158 aa).

Residues 1–23 form the signal peptide; it reads MWQFTVVSLGWLAVFLSLSGAKG. Disulfide bonds link C26/C37, C54/C154, and C129/C146. One can recognise a C-type lectin domain in the interval 33 to 155; it reads RNGVCNKLFP…CASLHPFICQ (123 aa). The Mannose-binding signature appears at 119–121; the sequence is EPN. Ca(2+)-binding residues include E127, N142, and D143.

This sequence belongs to the true venom lectin family. As to expression, expressed by the venom gland.

The protein resides in the secreted. Its function is as follows. Mannose-binding lectin which recognizes specific carbohydrate structures and agglutinates a variety of animal cells by binding to cell-surface glycoproteins and glycolipids. May be a calcium-dependent lectin. This chain is C-type lectin, found in Cerberus rynchops (Dog-faced water snake).